A 177-amino-acid polypeptide reads, in one-letter code: PLAC8-like protein 1 (177 aa).

This sequence belongs to the cornifelin family.

In Homo sapiens (Human), this protein is PLAC8-like protein 1 (PLAC8L1).